Consider the following 111-residue polypeptide: Nucleoid-associated protein glr3498 (111 aa).

This sequence belongs to the YbaB/EbfC family. As to quaternary structure, homodimer.

The protein resides in the cytoplasm. The protein localises to the nucleoid. Binds to DNA and alters its conformation. May be involved in regulation of gene expression, nucleoid organization and DNA protection. This chain is Nucleoid-associated protein glr3498, found in Gloeobacter violaceus (strain ATCC 29082 / PCC 7421).